The sequence spans 649 residues: Phosphomethylpyrimidine synthase (649 aa).

Substrate-binding positions include Asn235, Met264, Tyr293, His329, 349–351 (SRG), 390–393 (DGLR), and Glu429. Position 433 (His433) interacts with Zn(2+). Tyr456 contacts substrate. Zn(2+) is bound at residue His497. [4Fe-4S] cluster-binding residues include Cys577, Cys580, and Cys585. Positions 620-649 (GMRQKSQEFRDTGSELYHPAVGAKEAQLEE) are disordered. A compositionally biased stretch (basic and acidic residues) spans 621 to 632 (MRQKSQEFRDTG).

Belongs to the ThiC family. As to quaternary structure, homodimer. The cofactor is [4Fe-4S] cluster.

The catalysed reaction is 5-amino-1-(5-phospho-beta-D-ribosyl)imidazole + S-adenosyl-L-methionine = 4-amino-2-methyl-5-(phosphooxymethyl)pyrimidine + CO + 5'-deoxyadenosine + formate + L-methionine + 3 H(+). It participates in cofactor biosynthesis; thiamine diphosphate biosynthesis. In terms of biological role, catalyzes the synthesis of the hydroxymethylpyrimidine phosphate (HMP-P) moiety of thiamine from aminoimidazole ribotide (AIR) in a radical S-adenosyl-L-methionine (SAM)-dependent reaction. This Vibrio atlanticus (strain LGP32) (Vibrio splendidus (strain Mel32)) protein is Phosphomethylpyrimidine synthase.